Reading from the N-terminus, the 95-residue chain is Protein TusB (95 aa).

Belongs to the DsrH/TusB family. Heterohexamer, formed by a dimer of trimers. The hexameric TusBCD complex contains 2 copies each of TusB, TusC and TusD. The TusBCD complex interacts with TusE.

It localises to the cytoplasm. Functionally, part of a sulfur-relay system required for 2-thiolation of 5-methylaminomethyl-2-thiouridine (mnm(5)s(2)U) at tRNA wobble positions. This is Protein TusB from Yersinia pseudotuberculosis serotype O:1b (strain IP 31758).